The primary structure comprises 121 residues: 18 kDa learning-associated protein of slug (121 aa).

2 disordered regions span residues 44–67 and 95–121; these read TMKTTEPIQENKTSEGTSTDGSME and AVKKQKQKLNKLKIKKKSGKVSKAIKW. A compositionally biased stretch (polar residues) spans 45–64; the sequence is MKTTEPIQENKTSEGTSTDG.

Belongs to the learning-associated protein family. Expressed predominantly in cerebral ganglia (at protein level). The mRNA is highly expressed in cerebral ganglia, and is detected at lower levels in visceral-pedal ganglia, head, and body, but is not detected in the tail.

The protein localises to the cytoplasm. The protein resides in the secreted. May be involved in modulating long-term memory formation and retention, at least with respect to odor-taste associative learning. The protein is 18 kDa learning-associated protein of slug of Lehmannia marginata (Tree slug).